Reading from the N-terminus, the 140-residue chain is Sex-regulated protein janus-B (140 aa).

Arginine 42 contacts substrate. The active-site Proton acceptor is histidine 69. 110-112 (SRT) contributes to the substrate binding site.

It belongs to the janus family.

Its function is as follows. JanA and janB regulate somatic sex differentiation. The protein is Sex-regulated protein janus-B (janB) of Drosophila orena (Fruit fly).